Here is a 148-residue protein sequence, read N- to C-terminus: Large ribosomal subunit protein bL9 (148 aa).

Belongs to the bacterial ribosomal protein bL9 family.

Its function is as follows. Binds to the 23S rRNA. This Bacillus cytotoxicus (strain DSM 22905 / CIP 110041 / 391-98 / NVH 391-98) protein is Large ribosomal subunit protein bL9.